A 146-amino-acid chain; its full sequence is Oleosin (146 aa).

An N-acetylalanine modification is found at A2. Transmembrane regions (helical) follow at residues 22 to 42, 56 to 76, and 77 to 97; these read ILGF…TGLT, VLIF…VAVA, and GFLS…WLYN. The Proline-knot motif lies at 55–66; sequence PVLIFFSPILIP.

It belongs to the oleosin family. As to expression, expressed in pollen (at protein level).

The protein localises to the lipid droplet. It is found in the membrane. This is Oleosin from Pinus elliottii (Slash pine).